A 346-amino-acid polypeptide reads, in one-letter code: Putative glycosyltransferase HI_0523 (346 aa).

This sequence belongs to the glycosyltransferase 9 family.

The protein is Putative glycosyltransferase HI_0523 of Haemophilus influenzae (strain ATCC 51907 / DSM 11121 / KW20 / Rd).